The following is a 32-amino-acid chain: SGETEDVTIADIVVGLRIEEELGDAAVYAGAK.

Belongs to the enolase family. As to quaternary structure, homodimer. Mg(2+) is required as a cofactor.

Its subcellular location is the cytoplasm. The catalysed reaction is (2R)-2-phosphoglycerate = phosphoenolpyruvate + H2O. The protein operates within carbohydrate degradation; glycolysis; pyruvate from D-glyceraldehyde 3-phosphate: step 4/5. This Imperata cylindrica (Cogon grass) protein is Enolase.